A 447-amino-acid chain; its full sequence is Glucose-6-phosphate isomerase (447 aa).

The Proton donor role is filled by Glu288. Active-site residues include His309 and Lys423.

The protein belongs to the GPI family.

The protein resides in the cytoplasm. The enzyme catalyses alpha-D-glucose 6-phosphate = beta-D-fructose 6-phosphate. It functions in the pathway carbohydrate biosynthesis; gluconeogenesis. The protein operates within carbohydrate degradation; glycolysis; D-glyceraldehyde 3-phosphate and glycerone phosphate from D-glucose: step 2/4. Functionally, catalyzes the reversible isomerization of glucose-6-phosphate to fructose-6-phosphate. This chain is Glucose-6-phosphate isomerase, found in Lactobacillus gasseri (strain ATCC 33323 / DSM 20243 / BCRC 14619 / CIP 102991 / JCM 1131 / KCTC 3163 / NCIMB 11718 / NCTC 13722 / AM63).